The chain runs to 227 residues: MELVFIRHGFSEWNAKNLFTGWRDVNLTERGVEEAKAAGKKLLDKGYEFDIAFTSVLTRAIKTCNIVLEESHQLWIPQVKNWRLNERHYGALQGLDKKATAEQYGDEQVHIWRRSYDISPPDLDPQDPNSAHNDRRYANIPFDVVPNAENLKLTLERALPFWEDQIAPAMLSGKRVLVVAHGNSLRALAKHIIGISDAEIMDFEIPTGQPLVLKLDDKLNYVEHYYL.

Residues R7–N14, T20–G21, R59, E86–Y89, K97, R113–R114, and G182–N183 contribute to the substrate site. H8 functions as the Tele-phosphohistidine intermediate in the catalytic mechanism. E86 serves as the catalytic Proton donor/acceptor.

It belongs to the phosphoglycerate mutase family. BPG-dependent PGAM subfamily. Homodimer.

The enzyme catalyses (2R)-2-phosphoglycerate = (2R)-3-phosphoglycerate. The protein operates within carbohydrate degradation; glycolysis; pyruvate from D-glyceraldehyde 3-phosphate: step 3/5. In terms of biological role, catalyzes the interconversion of 2-phosphoglycerate and 3-phosphoglycerate. The protein is 2,3-bisphosphoglycerate-dependent phosphoglycerate mutase of Haemophilus influenzae (strain PittGG).